The primary structure comprises 450 residues: Phosphoglucosamine mutase 2 (450 aa).

Residue Ser101 is the Phosphoserine intermediate of the active site. Ser101, Asp245, Asp247, and Asp249 together coordinate Mg(2+). Position 101 is a phosphoserine (Ser101).

The protein belongs to the phosphohexose mutase family. Mg(2+) serves as cofactor. Post-translationally, activated by phosphorylation.

It catalyses the reaction alpha-D-glucosamine 1-phosphate = D-glucosamine 6-phosphate. In terms of biological role, catalyzes the conversion of glucosamine-6-phosphate to glucosamine-1-phosphate. In Shewanella sp. (strain MR-7), this protein is Phosphoglucosamine mutase 2.